A 352-amino-acid chain; its full sequence is UDP-3-O-acylglucosamine N-acyltransferase (352 aa).

Catalysis depends on H242, which acts as the Proton acceptor.

The protein belongs to the transferase hexapeptide repeat family. LpxD subfamily. In terms of assembly, homotrimer.

It carries out the reaction a UDP-3-O-[(3R)-3-hydroxyacyl]-alpha-D-glucosamine + a (3R)-hydroxyacyl-[ACP] = a UDP-2-N,3-O-bis[(3R)-3-hydroxyacyl]-alpha-D-glucosamine + holo-[ACP] + H(+). Its pathway is bacterial outer membrane biogenesis; LPS lipid A biosynthesis. In terms of biological role, catalyzes the N-acylation of UDP-3-O-acylglucosamine using 3-hydroxyacyl-ACP as the acyl donor. Is involved in the biosynthesis of lipid A, a phosphorylated glycolipid that anchors the lipopolysaccharide to the outer membrane of the cell. The chain is UDP-3-O-acylglucosamine N-acyltransferase from Alkalilimnicola ehrlichii (strain ATCC BAA-1101 / DSM 17681 / MLHE-1).